Reading from the N-terminus, the 293-residue chain is D-psicose 3-epimerase (293 aa).

The substrate site is built by Tyr6 and Ala107. The Proton donor/acceptor role is filled by Glu150. Glu150 serves as a coordination point for Mn(2+). Substrate is bound by residues Glu156 and 183–186; that span reads DTFH. Residues Asp183 and His209 each coordinate Mn(2+). A substrate-binding site is contributed by Arg215. Glu244 acts as the Proton donor/acceptor in catalysis. A Mn(2+)-binding site is contributed by Glu244.

Belongs to the hyi family. In terms of assembly, homotetramer. Requires Mn(2+) as cofactor. Co(2+) serves as cofactor.

The enzyme catalyses D-allulose = keto-D-fructose. Functionally, involved in the biosynthesis of D-psicose. Catalyzes the reversible epimerization of D-fructose at the C3 position to yield D-psicose. The enzyme is highly specific for D-psicose and shows very low activity with D-tagatose. This Ruminiclostridium cellulolyticum (strain ATCC 35319 / DSM 5812 / JCM 6584 / H10) (Clostridium cellulolyticum) protein is D-psicose 3-epimerase.